Reading from the N-terminus, the 119-residue chain is Large ribosomal subunit protein uL22 (119 aa).

It belongs to the universal ribosomal protein uL22 family. Part of the 50S ribosomal subunit.

In terms of biological role, this protein binds specifically to 23S rRNA; its binding is stimulated by other ribosomal proteins, e.g. L4, L17, and L20. It is important during the early stages of 50S assembly. It makes multiple contacts with different domains of the 23S rRNA in the assembled 50S subunit and ribosome. Its function is as follows. The globular domain of the protein is located near the polypeptide exit tunnel on the outside of the subunit, while an extended beta-hairpin is found that lines the wall of the exit tunnel in the center of the 70S ribosome. This Rickettsia akari (strain Hartford) protein is Large ribosomal subunit protein uL22.